Here is a 578-residue protein sequence, read N- to C-terminus: MAASTTLALSHPKTLAAAAAAAPKAPTAPAAVSFPVSHAACAPLAARRRAVTAMVAAPPAVGAAMPSLDFDTSVFNKEKVSLAGHEEYIVRGGRNLFPLLPEAFKGIKQIGVIGWGSQGPAQAQNLRDSLAEAKSDIVVKIGLRKGSKSFDEARAAGFTEESGTLGDIWETVSGSDLVLLLISDAAQADNYEKIFSHMKPNSILGLSHGFLLGHLQSAGLDFPKNISVIAVCPKGMGPSVRRLYVQGKEINGAGINSSFAVHQDVDGRATDVALGWSVALGSPFTFATTLEQEYKSDIFGERGILLGAVHGIVEALFRRYTEQGMDEEMAYKNTVEGITGIISKTISKKGMLEVYNSLTEEGKKEFNKAYSASFYPCMDILYECYEDVASGSEIRSVVLAGRRFYEKEGLPAFPMGNIDQTRMWKVGEKVRSTRPENDLGPLHPFTAGVYVALMMAQIEVLRKKGHSYSEIINESVIESVDSLNPFMHARGVAFMVDNCSTTARLGSRKWAPRFDYILTQQAFVTVDKDAPINQDLISNFMSDPVHGAIEVCAELRPTVDISVPANADFVRPELRQSS.

The transit peptide at 1–52 directs the protein to the chloroplast; sequence MAASTTLALSHPKTLAAAAAAAPKAPTAPAAVSFPVSHAACAPLAARRRAVT. A KARI N-terminal Rossmann domain is found at 90 to 288; sequence VRGGRNLFPL…ALGSPFTFAT (199 aa). NADP(+)-binding positions include 111–118, 144–149, and 183–187; these read GVIGWGSQ, RKGSKS, and SDAAQ. Residue H208 is part of the active site. KARI C-terminal knotted domains are found at residues 289–437 and 438–574; these read TLEQ…RPEN and DLGP…RPEL. 4 residues coordinate Mg(2+): D297, E301, E474, and E478. S500 is a binding site for substrate.

The protein belongs to the ketol-acid reductoisomerase family. Homodimer. It depends on Mg(2+) as a cofactor.

The protein localises to the plastid. It localises to the chloroplast. It carries out the reaction (2R)-2,3-dihydroxy-3-methylbutanoate + NADP(+) = (2S)-2-acetolactate + NADPH + H(+). It catalyses the reaction (2R,3R)-2,3-dihydroxy-3-methylpentanoate + NADP(+) = (S)-2-ethyl-2-hydroxy-3-oxobutanoate + NADPH + H(+). Its pathway is amino-acid biosynthesis; L-isoleucine biosynthesis; L-isoleucine from 2-oxobutanoate: step 2/4. It participates in amino-acid biosynthesis; L-valine biosynthesis; L-valine from pyruvate: step 2/4. This Oryza sativa subsp. japonica (Rice) protein is Ketol-acid reductoisomerase, chloroplastic.